We begin with the raw amino-acid sequence, 331 residues long: Phenylalanine--tRNA ligase alpha subunit (331 aa).

Residue Glu254 participates in Mg(2+) binding.

Belongs to the class-II aminoacyl-tRNA synthetase family. Phe-tRNA synthetase alpha subunit type 1 subfamily. Tetramer of two alpha and two beta subunits. Mg(2+) serves as cofactor.

Its subcellular location is the cytoplasm. It carries out the reaction tRNA(Phe) + L-phenylalanine + ATP = L-phenylalanyl-tRNA(Phe) + AMP + diphosphate + H(+). The sequence is that of Phenylalanine--tRNA ligase alpha subunit from Blochmanniella pennsylvanica (strain BPEN).